We begin with the raw amino-acid sequence, 81 residues long: Photosystem I iron-sulfur center (81 aa).

4Fe-4S ferredoxin-type domains are found at residues Ser-2–Trp-31 and Ile-39–Tyr-68. The [4Fe-4S] cluster site is built by Cys-11, Cys-14, Cys-17, Cys-21, Cys-48, Cys-51, Cys-54, and Cys-58.

In terms of assembly, the cyanobacterial PSI reaction center is composed of one copy each of PsaA,B,C,D,E,F,I,J,K,L,M and X, and forms trimeric complexes. Requires [4Fe-4S] cluster as cofactor.

It is found in the cellular thylakoid membrane. The catalysed reaction is reduced [plastocyanin] + hnu + oxidized [2Fe-2S]-[ferredoxin] = oxidized [plastocyanin] + reduced [2Fe-2S]-[ferredoxin]. Functionally, apoprotein for the two 4Fe-4S centers FA and FB of photosystem I (PSI); essential for photochemical activity. FB is the terminal electron acceptor of PSI, donating electrons to ferredoxin. The C-terminus interacts with PsaA/B/D and helps assemble the protein into the PSI complex. Required for binding of PsaD and PsaE to PSI. PSI is a plastocyanin/cytochrome c6-ferredoxin oxidoreductase, converting photonic excitation into a charge separation, which transfers an electron from the donor P700 chlorophyll pair to the spectroscopically characterized acceptors A0, A1, FX, FA and FB in turn. This Synechococcus elongatus (strain ATCC 33912 / PCC 7942 / FACHB-805) (Anacystis nidulans R2) protein is Photosystem I iron-sulfur center.